Here is a 1671-residue protein sequence, read N- to C-terminus: AF4/FMR2 family member lilli (1671 aa).

6 disordered regions span residues 53–79 (YSQN…QQGI), 126–304 (SAPG…EKDV), 393–599 (LAGE…SNKW), 723–761 (DSGT…QLPG), 774–1162 (PTQS…TTPH), and 1185–1311 (KLTP…LQIG). Over residues 70–79 (REKIERQQGI) the composition is skewed to basic and acidic residues. 2 stretches are compositionally biased toward low complexity: residues 145–179 (SLGH…QQQQ) and 210–242 (PSSS…SSGG). The residue at position 416 (Thr-416) is a Phosphothreonine. Positions 424–437 (LKTEKNHSLEKQDS) are enriched in basic and acidic residues. Residues 439–450 (LENDLELSESED) show a composition bias toward acidic residues. Phosphoserine is present on residues Ser-446 and Ser-448. Positions 459–479 (SAGNSSNSSESDSSESGSESS) are enriched in low complexity. A compositionally biased stretch (basic residues) spans 487–496 (HPNHQQHHHQ). 2 stretches are compositionally biased toward low complexity: residues 497-522 (LQQQ…PQPL) and 561-587 (PAGV…GSSS). The segment covering 588 to 599 (NKTPSPTESNKW) has biased composition (polar residues). A compositionally biased stretch (low complexity) spans 723–755 (DSGTSASGSSSSSSSSSDSAVGGEVVPMPGPGE). Polar residues predominate over residues 774 to 786 (PTQSQKAPPSNSV). A compositionally biased stretch (basic residues) spans 800 to 810 (QRQKKPRKKKA). Residues Ser-819 and Ser-820 each carry the phosphoserine modification. A DNA-binding region (a.T hook) is located at residues 849–861 (KKGRGRPRKQQQS). Residues 858–896 (QQQSGGSGNLSSASAGSSSQTKGPTLTAAKKPLAKTPLA) are compositionally biased toward low complexity. Phosphoserine is present on residues Ser-869 and Ser-871. Residues 907 to 917 (SQSSSNGNTPT) show a composition bias toward polar residues. Low complexity-rich tracts occupy residues 947–963 (SSSA…SSSS) and 988–1002 (ALLG…SSGS). Positions 1009-1020 (SRSQVGSGQALA) are enriched in polar residues. Residues 1032-1058 (SQHSQHLSSSECSSSSGGCTAVCSSSS) show a composition bias toward low complexity. The segment covering 1063 to 1080 (EGRREKERERKPKSDKNK) has biased composition (basic and acidic residues). The segment covering 1120 to 1130 (QPPPPHAPPAA) has biased composition (pro residues). The segment covering 1188 to 1203 (PAQQNGHLTPKDQATN) has biased composition (polar residues). Basic and acidic residues-rich tracts occupy residues 1224–1241 (EHPV…EAKF) and 1250–1280 (FQLK…EQPP). The residue at position 1360 (Ser-1360) is a Phosphoserine. At Thr-1362 the chain carries Phosphothreonine. The span at 1562 to 1581 (NTPSSISPSNSVGSQGSGSN) shows a compositional bias: low complexity. Positions 1562–1586 (NTPSSISPSNSVGSQGSGSNTPPGR) are disordered.

It belongs to the AF4 family.

The protein resides in the nucleus. Has a role in transcriptional regulation. Acts in parallel with the Ras/MAPK and the PI3K/PKB pathways in the control of cell identity and cellular growth. Essential for regulation of the cytoskeleton and cell growth but not for cell proliferation or growth rate. Required specifically for the microtubule-based basal transport of lipid droplets. Plays a partially redundant function downstream of Raf in cell fate specification in the developing eye. Pair-rule protein that regulates embryonic cellularization, gastrulation and segmentation. The chain is AF4/FMR2 family member lilli from Drosophila yakuba (Fruit fly).